A 481-amino-acid chain; its full sequence is 3-isopropylmalate dehydratase large subunit (481 aa).

Positions 363, 423, and 426 each coordinate [4Fe-4S] cluster. The segment at 432 to 459 (DQLKPGERSASTSNRNFEGRQGPGGRTH) is disordered.

Belongs to the aconitase/IPM isomerase family. LeuC type 1 subfamily. In terms of assembly, heterodimer of LeuC and LeuD. It depends on [4Fe-4S] cluster as a cofactor.

The catalysed reaction is (2R,3S)-3-isopropylmalate = (2S)-2-isopropylmalate. The protein operates within amino-acid biosynthesis; L-leucine biosynthesis; L-leucine from 3-methyl-2-oxobutanoate: step 2/4. Catalyzes the isomerization between 2-isopropylmalate and 3-isopropylmalate, via the formation of 2-isopropylmaleate. The chain is 3-isopropylmalate dehydratase large subunit from Corynebacterium glutamicum (strain R).